Here is a 481-residue protein sequence, read N- to C-terminus: UDP-glycosyltransferase 73B3 (481 aa).

The Proton acceptor role is filled by histidine 21. Position 21 (histidine 21) interacts with an anthocyanidin. Aspartate 132 (charge relay) is an active-site residue. Residues alanine 355, glutamine 357, histidine 372, tryptophan 375, asparagine 376, serine 377, and glutamate 380 each contribute to the UDP-alpha-D-glucose site. Alanine 395 contacts an anthocyanidin. The UDP-alpha-D-glucose site is built by glutamate 396 and glutamine 397.

The protein belongs to the UDP-glycosyltransferase family. As to expression, expressed in roots and flowers.

It carries out the reaction a flavonol + UDP-alpha-D-glucose = a flavonol 3-O-beta-D-glucoside + UDP + H(+). In terms of biological role, possesses quercetin 3-O-glucosyltransferase activity in vitro. Also active in vitro on benzoates and benzoate derivatives. Involved in stress or defense responses. The polypeptide is UDP-glycosyltransferase 73B3 (UGT73B3) (Arabidopsis thaliana (Mouse-ear cress)).